The primary structure comprises 837 residues: MTTKRAYKLQEFVAHSAAVNCLKIGRKSSRVLVTGGEDHKVNLWAIGKPNAILSLYGHSSGIDSVTFDASEVLVAAGAASGTIKLWDLEEAKIVRTLTGHRSNCISVDFHPFGEFFASGSLDTNLKIWDIRKKGCIHTYKGHTRGVNVLRFTPDGRWVVSGGEDNIVKVWDLTAGKLLTEFKSHEGQIQSLDFHPHEFLLATGSADRTVKFWDLETFELIGSGGPETAGVRCLSFNPDGKTVLCGLQESLKIFSWEPIRCHDGVDVGWSRLSDMNVHEGKLLGCSYNQSCVGVWVVDLSRTEPCMAGDTAQSNGHPEKRSCSGRDPVVLNDNNSKTVLGKLSVSQNVDPLLKETKSLGRLSVSQNSDPSTKETKSIGRSSTSQNSESSMKESKPLGRLSVSQNSDVSKESRTFSSTGSLPGTPHRVSSTNVSKATSGVSTAVSNAATSRRNFTKANPKANPVNKAADFAPVIVPRADPRIEQATESRAELDIIARTMPYSLQAADSRRSPSSRNNPDLPDASVLEMSESQPVEPNNIPDGGTLPGGKVGMRGATERSINDFRYKRYGRSNSRSRMGSPPRNHDENYDLVSHRSNRDPSPTESQKGGRFQSLVINRERRGRFSNFEGPVSNFSSGNMPAPNIRPSNMFKQRGNHMPVEQGIDSPSEENIVEDIMGKHNQFVSSMQSRLAKLQVVRRYWERNDVKNSIGSIEKMADNAVTADVLGIITERNEILTLDNCTSLLPLLTALLGSGMDQHLSVSLDLLLKLVRLYGSPIYSSLSAPASVGVDIEAEQRIERYSRCFVELEKVKACLPSLARRGGLVAKSVLELNLAFQEVSS.

WD repeat units lie at residues 14–54, 57–96, 99–138, 141–182, 184–222, 225–265, and 267–304; these read AHSA…AILS, GHSS…IVRT, GHRS…CIHT, GHTR…TEFK, HEGQ…LIGS, PETA…DGVD, and GWSR…TEPC. The DWD box motif lies at 115 to 131; it reads FFASGSLDTNLKIWDIR. 3 disordered regions span residues 307 to 328, 358 to 462, and 501 to 614; these read GDTA…DPVV, GRLS…ANPV, and LQAA…LVIN. Polar residues-rich tracts occupy residues 376-387 and 412-450; these read IGRSSTSQNSES and TFSS…TSRR. A compositionally biased stretch (low complexity) spans 509-520; sequence SPSSRNNPDLPD. Composition is skewed to basic and acidic residues over residues 553 to 563 and 580 to 595; these read ATERSINDFRY and RNHD…RSNR.

The protein belongs to the WD repeat KATNB1 family. In terms of assembly, component of KTN80-KTN1 complexes composed of a hexamer of KTN1-KTN80 heterodimers that sense microtubule (MT) geometry to confer precise MT severing. Interacts directly with AAA1/KTN1, and weakly with KTN80.1 and KTN80.3. As to expression, expressed in siliques, flowers, leaves, stems and roots.

It is found in the cytoplasm. The protein resides in the cytoskeleton. In terms of biological role, may participate in a complex which severs microtubules in an ATP-dependent manner. This activity may promote rapid reorganization of cellular microtubule arrays. Confers precision to microtubule (MT) severing by specific targeting of KTN1 to MT cleavage sites such as crossover or branching nucleation sites. Together with other KTN80s, regulates cell elongation by modulating MT organization. This is Katanin p80 WD40 repeat-containing subunit B1 homolog KTN80.4 from Arabidopsis thaliana (Mouse-ear cress).